The chain runs to 513 residues: DNA damage response protein kinase DUN1 (513 aa).

A compositionally biased stretch (basic and acidic residues) spans 1 to 12 (MSLSTKREHSGD). The segment at 1–29 (MSLSTKREHSGDVTDSSFKRQQRSNKPSS) is disordered. Serine 10 carries the phosphoserine modification. Positions 56–112 (TTIGRSRSCDVILSEPDISTFHAEFHLLQMDVDNFQRNLINVIDKSRNGTFINGNRL) constitute an FHA domain. Phosphoserine is present on serine 139. Residues 200–480 (YLLGKELGAG…IDEALNHPWF (281 aa)) enclose the Protein kinase domain. Residues 206-214 (LGAGHYALV) and lysine 229 contribute to the ATP site. Catalysis depends on aspartate 328, which acts as the Proton acceptor. Threonine 380 bears the Phosphothreonine mark.

This sequence belongs to the protein kinase superfamily. CAMK Ser/Thr protein kinase family. CHEK2 subfamily. As to quaternary structure, interacts with the PAB-dependent poly(A)-nuclease (PAN) complex regulatory subunit PAN3 via its forkhead-associated (FHA) domain. Post-translationally, autophosphorylation increases in response to DNA damage.

It localises to the nucleus. It catalyses the reaction L-seryl-[protein] + ATP = O-phospho-L-seryl-[protein] + ADP + H(+). The enzyme catalyses L-threonyl-[protein] + ATP = O-phospho-L-threonyl-[protein] + ADP + H(+). Functionally, transducer of the DNA damage signal. Phosphorylates SML1 on serine residues. Cooperates with the PAN deadenylation complex in the regulation of RAD5 mRNA levels and cell survival in response to replicational stress. This is DNA damage response protein kinase DUN1 (DUN1) from Saccharomyces cerevisiae (strain ATCC 204508 / S288c) (Baker's yeast).